Reading from the N-terminus, the 400-residue chain is Nucleoside permease NupC (400 aa).

The Cytoplasmic portion of the chain corresponds to 1–3 (MDR). The helical transmembrane segment at 4 to 24 (VLHFVLALAVVAILALLVSSD) threads the bilayer. Residues 25–36 (RKKIRIRYVIQL) are Periplasmic-facing. A helical membrane pass occupies residues 37-57 (LVIEVLLAWFFLNSDVGLGFV). The Cytoplasmic segment spans residues 58–86 (KGFSEMFEKLLGFANEGTNFVFGSMNDQG). Residues 87-107 (LAFFFLKVLCPIVFISALIGI) form a helical membrane-spanning segment. Over 108–168 (LQHIRVLPVI…GKISRNRMYT (61 aa)) the chain is Periplasmic. Residues 169 to 189 (MAATAMSTVSMSIVGAYMTML) traverse the membrane as a helical segment. Residues 190 to 192 (EPK) lie on the Cytoplasmic side of the membrane. The helical transmembrane segment at 193–213 (YVVAALVLNMFSTFIVLSLIN) threads the bilayer. Topologically, residues 214–250 (PYRVDASEENIQMSNLHEGQSFFEMLGEYILAGFKVA) are periplasmic. The chain crosses the membrane as a helical span at residues 251–271 (IIVAAMLIGFIALIAALNALF). Topologically, residues 272–281 (ATVTGWFGYS) are cytoplasmic. The helical transmembrane segment at 282 to 302 (ISFQGILGYIFYPIAWVMGVP) threads the bilayer. Over 303-341 (SSEALQVGSIMATKLVSNEFVAMMDLQKIASTLSPRAEG) the chain is Periplasmic. Residues 342–362 (IISVFLVSFANFSSIGIIAGA) form a helical membrane-spanning segment. Topologically, residues 363–378 (VKGLNEEQGNVVSRFG) are cytoplasmic. The helical transmembrane segment at 379–399 (LKLVYGSTLVSVLSASIAALV) threads the bilayer. Position 400 (Leu400) is a topological domain, periplasmic.

The protein belongs to the concentrative nucleoside transporter (CNT) (TC 2.A.41) family.

Its subcellular location is the cell inner membrane. The enzyme catalyses adenosine(in) + H(+)(in) = adenosine(out) + H(+)(out). The catalysed reaction is uridine(in) + H(+)(in) = uridine(out) + H(+)(out). It catalyses the reaction thymidine(in) + H(+)(in) = thymidine(out) + H(+)(out). It carries out the reaction cytidine(in) + H(+)(in) = cytidine(out) + H(+)(out). The enzyme catalyses 2'-deoxycytidine(in) + H(+)(in) = 2'-deoxycytidine(out) + H(+)(out). With respect to regulation, transport is inhibited by the proton uncoupler dinitrophenol. Inhibited by the nucleoside antibiotic showdomycin. Nucleoside transport protein that can transport adenosine, uridine, thymidine, cytidine and deoxycytidine. Shows weak activity with inosine and xanthosine. Transport is driven by a proton motive force. Does not transport guanosine, deoxyguanosine, hypoxanthine or uracil. Also shows activity with the chemotherapeutic drugs 3'-azido-3'-deoxythymidine (AZT), 2',3'- dideoxycytidine (ddC) and 2'-deoxy-2',2'-difluorocytidine (gemcitabine). The polypeptide is Nucleoside permease NupC (Escherichia coli (strain K12)).